The primary structure comprises 335 residues: Fructose-1,6-bisphosphatase class 1 (335 aa).

The Mg(2+) site is built by Glu91, Asp113, Leu115, and Asp116. Residues 116-119 (DGSS), Asn208, and Lys274 each bind substrate. Glu280 is a Mg(2+) binding site.

It belongs to the FBPase class 1 family. In terms of assembly, homotetramer. Mg(2+) serves as cofactor.

It localises to the cytoplasm. The catalysed reaction is beta-D-fructose 1,6-bisphosphate + H2O = beta-D-fructose 6-phosphate + phosphate. Its pathway is carbohydrate biosynthesis; gluconeogenesis. The protein is Fructose-1,6-bisphosphatase class 1 of Chromobacterium violaceum (strain ATCC 12472 / DSM 30191 / JCM 1249 / CCUG 213 / NBRC 12614 / NCIMB 9131 / NCTC 9757 / MK).